Consider the following 505-residue polypeptide: Folate transporter 1 (505 aa).

Transmembrane regions (helical) follow at residues 58 to 78 (SLIA…IYLL), 89 to 109 (LSIV…WAVI), 122 to 142 (YYLL…GLIT), and 146 to 166 (LFIT…CNVI). N-linked (GlcNAc...) asparagine glycans are attached at residues asparagine 177, asparagine 181, and asparagine 186. The next 2 membrane-spanning stretches (helical) occupy residues 192 to 212 (AFRK…LLLI) and 216 to 236 (HIFL…FFII). Residue asparagine 240 is glycosylated (N-linked (GlcNAc...) asparagine). The next 5 membrane-spanning stretches (helical) occupy residues 266 to 286 (IIFI…FFYI), 300 to 320 (MAMF…LFFT), 326 to 346 (KLLL…LVVI), 352 to 372 (FLFI…EFIA), and 405 to 425 (FASI…NITS). N-linked (GlcNAc...) asparagine glycosylation occurs at asparagine 427. Residues 431 to 451 (LPYMIIICCLTNIIPIFFLYI) form a helical membrane-spanning segment. Asparagine 454 carries N-linked (GlcNAc...) asparagine glycosylation.

It belongs to the major facilitator superfamily. Folate-biopterin transporter (TC 2.A.71) family.

It is found in the cell membrane. It catalyses the reaction folate(in) + H(+)(in) = folate(out) + H(+)(out). Transport of folates is inhibited by probenecid and methotrexate. Functionally, folate transporter with broad substrate specificity. Transports folic acid, folinic acid, pteroic acid, dihydropteroic acid, the folate precursor p-amino benzoic acid (pABA) and the human folate catabolite pABA monoglutamate. This chain is Folate transporter 1, found in Plasmodium falciparum (isolate 3D7).